Here is a 78-residue protein sequence, read N- to C-terminus: Exodeoxyribonuclease 7 small subunit (78 aa).

Belongs to the XseB family. In terms of assembly, heterooligomer composed of large and small subunits.

The protein resides in the cytoplasm. The catalysed reaction is Exonucleolytic cleavage in either 5'- to 3'- or 3'- to 5'-direction to yield nucleoside 5'-phosphates.. Bidirectionally degrades single-stranded DNA into large acid-insoluble oligonucleotides, which are then degraded further into small acid-soluble oligonucleotides. In Idiomarina loihiensis (strain ATCC BAA-735 / DSM 15497 / L2-TR), this protein is Exodeoxyribonuclease 7 small subunit.